Consider the following 99-residue polypeptide: NADH-ubiquinone oxidoreductase chain 4L (99 aa).

A run of 3 helical transmembrane segments spans residues 1 to 21, 25 to 45, and 56 to 76; these read MTIY…FFTQ, ILSL…SVAV, and VMIL…SLLV.

Belongs to the complex I subunit 4L family.

Its subcellular location is the mitochondrion membrane. It carries out the reaction a ubiquinone + NADH + 5 H(+)(in) = a ubiquinol + NAD(+) + 4 H(+)(out). Its function is as follows. Core subunit of the mitochondrial membrane respiratory chain NADH dehydrogenase (Complex I) that is believed to belong to the minimal assembly required for catalysis. Complex I functions in the transfer of electrons from NADH to the respiratory chain. The immediate electron acceptor for the enzyme is believed to be ubiquinone. This Albinaria caerulea (Land snail) protein is NADH-ubiquinone oxidoreductase chain 4L (ND4L).